A 723-amino-acid chain; its full sequence is Fatty acid oxidation complex subunit alpha (723 aa).

The tract at residues Met1 to Glu189 is enoyl-CoA hydratase/isomerase. A substrate-binding site is contributed by Asp296. Residues Asn311 to Leu723 are 3-hydroxyacyl-CoA dehydrogenase. NAD(+) is bound by residues Met325, Asp344, Val401–Glu403, Lys408, and Ser430. The active-site For 3-hydroxyacyl-CoA dehydrogenase activity is the His451. Asn454 contacts NAD(+). Asn501 and Tyr661 together coordinate substrate.

In the N-terminal section; belongs to the enoyl-CoA hydratase/isomerase family. The protein in the C-terminal section; belongs to the 3-hydroxyacyl-CoA dehydrogenase family. As to quaternary structure, heterotetramer of two alpha chains (FadB) and two beta chains (FadA).

It catalyses the reaction a (3S)-3-hydroxyacyl-CoA + NAD(+) = a 3-oxoacyl-CoA + NADH + H(+). The enzyme catalyses a (3S)-3-hydroxyacyl-CoA = a (2E)-enoyl-CoA + H2O. The catalysed reaction is a 4-saturated-(3S)-3-hydroxyacyl-CoA = a (3E)-enoyl-CoA + H2O. It carries out the reaction (3S)-3-hydroxybutanoyl-CoA = (3R)-3-hydroxybutanoyl-CoA. It catalyses the reaction a (3Z)-enoyl-CoA = a 4-saturated (2E)-enoyl-CoA. The enzyme catalyses a (3E)-enoyl-CoA = a 4-saturated (2E)-enoyl-CoA. It participates in lipid metabolism; fatty acid beta-oxidation. Its function is as follows. Involved in the aerobic and anaerobic degradation of long-chain fatty acids via beta-oxidation cycle. Catalyzes the formation of 3-oxoacyl-CoA from enoyl-CoA via L-3-hydroxyacyl-CoA. It can also use D-3-hydroxyacyl-CoA and cis-3-enoyl-CoA as substrate. The protein is Fatty acid oxidation complex subunit alpha of Vibrio atlanticus (strain LGP32) (Vibrio splendidus (strain Mel32)).